A 374-amino-acid chain; its full sequence is Putative clathrin assembly protein At1g33340 (374 aa).

One can recognise an ENTH domain in the interval 30-163 (YNEKAFFDIE…GWIINQAGKL (134 aa)).

Its subcellular location is the membrane. The protein localises to the clathrin-coated pit. It is found in the golgi apparatus. It localises to the cytoplasmic vesicle. The protein resides in the clathrin-coated vesicle. The chain is Putative clathrin assembly protein At1g33340 from Arabidopsis thaliana (Mouse-ear cress).